The primary structure comprises 401 residues: Glutamyl-tRNA reductase (401 aa).

Substrate-binding positions include 45 to 48 (TCNR), S101, 106 to 108 (EDQ), and Q112. Catalysis depends on C46, which acts as the Nucleophile. 177–182 (GYGDVG) contributes to the NADP(+) binding site.

Belongs to the glutamyl-tRNA reductase family. Homodimer.

It catalyses the reaction (S)-4-amino-5-oxopentanoate + tRNA(Glu) + NADP(+) = L-glutamyl-tRNA(Glu) + NADPH + H(+). The protein operates within porphyrin-containing compound metabolism; protoporphyrin-IX biosynthesis; 5-aminolevulinate from L-glutamyl-tRNA(Glu): step 1/2. In terms of biological role, catalyzes the NADPH-dependent reduction of glutamyl-tRNA(Glu) to glutamate 1-semialdehyde (GSA). The protein is Glutamyl-tRNA reductase of Clostridium botulinum (strain Alaska E43 / Type E3).